A 160-amino-acid chain; its full sequence is Cytochrome b6-f complex subunit 4 (160 aa).

The next 3 helical transmembrane spans lie at 36–56 (LLYIFPVVILGTIACVVGLAV), 95–115 (LLGIALQTLIPLGLILIPFIE), and 131–151 (AFFLFGTALTIYLGIGACLPI).

This sequence belongs to the cytochrome b family. PetD subfamily. The 4 large subunits of the cytochrome b6-f complex are cytochrome b6, subunit IV (17 kDa polypeptide, PetD), cytochrome f and the Rieske protein, while the 4 small subunits are PetG, PetL, PetM and PetN. The complex functions as a dimer.

The protein localises to the cellular thylakoid membrane. Its function is as follows. Component of the cytochrome b6-f complex, which mediates electron transfer between photosystem II (PSII) and photosystem I (PSI), cyclic electron flow around PSI, and state transitions. This chain is Cytochrome b6-f complex subunit 4, found in Prochlorococcus marinus (strain SARG / CCMP1375 / SS120).